Here is a 476-residue protein sequence, read N- to C-terminus: Bifunctional protein GlmU (476 aa).

The tract at residues 1–232 (MDNLAAIILA…PVEVMGINDR (232 aa)) is pyrophosphorylase. UDP-N-acetyl-alpha-D-glucosamine-binding positions include 9 to 12 (LAAG), lysine 23, glutamine 75, and 80 to 81 (GT). Aspartate 105 contacts Mg(2+). UDP-N-acetyl-alpha-D-glucosamine is bound by residues glycine 142, glutamate 157, asparagine 172, and asparagine 230. Asparagine 230 is a Mg(2+) binding site. Residues 233–253 (VQLAEAARHARRRIAEEHMLN) form a linker region. Positions 254–476 (GVTLVDPAAT…EGWKLRKRDQ (223 aa)) are N-acetyltransferase. Positions 353 and 371 each coordinate UDP-N-acetyl-alpha-D-glucosamine. Histidine 383 functions as the Proton acceptor in the catalytic mechanism. The UDP-N-acetyl-alpha-D-glucosamine site is built by tyrosine 386 and asparagine 397. Residues 406–407 (NY), serine 425, alanine 443, and arginine 460 each bind acetyl-CoA.

This sequence in the N-terminal section; belongs to the N-acetylglucosamine-1-phosphate uridyltransferase family. In the C-terminal section; belongs to the transferase hexapeptide repeat family. As to quaternary structure, homotrimer. The cofactor is Mg(2+).

It localises to the cytoplasm. It catalyses the reaction alpha-D-glucosamine 1-phosphate + acetyl-CoA = N-acetyl-alpha-D-glucosamine 1-phosphate + CoA + H(+). The catalysed reaction is N-acetyl-alpha-D-glucosamine 1-phosphate + UTP + H(+) = UDP-N-acetyl-alpha-D-glucosamine + diphosphate. Its pathway is nucleotide-sugar biosynthesis; UDP-N-acetyl-alpha-D-glucosamine biosynthesis; N-acetyl-alpha-D-glucosamine 1-phosphate from alpha-D-glucosamine 6-phosphate (route II): step 2/2. It functions in the pathway nucleotide-sugar biosynthesis; UDP-N-acetyl-alpha-D-glucosamine biosynthesis; UDP-N-acetyl-alpha-D-glucosamine from N-acetyl-alpha-D-glucosamine 1-phosphate: step 1/1. The protein operates within bacterial outer membrane biogenesis; LPS lipid A biosynthesis. Its function is as follows. Catalyzes the last two sequential reactions in the de novo biosynthetic pathway for UDP-N-acetylglucosamine (UDP-GlcNAc). The C-terminal domain catalyzes the transfer of acetyl group from acetyl coenzyme A to glucosamine-1-phosphate (GlcN-1-P) to produce N-acetylglucosamine-1-phosphate (GlcNAc-1-P), which is converted into UDP-GlcNAc by the transfer of uridine 5-monophosphate (from uridine 5-triphosphate), a reaction catalyzed by the N-terminal domain. The polypeptide is Bifunctional protein GlmU (Geobacter sulfurreducens (strain ATCC 51573 / DSM 12127 / PCA)).